Consider the following 291-residue polypeptide: Homoserine kinase (291 aa).

ATP is bound at residue Arg80–Ala90.

It belongs to the GHMP kinase family. Homoserine kinase subfamily.

The protein resides in the cytoplasm. It carries out the reaction L-homoserine + ATP = O-phospho-L-homoserine + ADP + H(+). The protein operates within amino-acid biosynthesis; L-threonine biosynthesis; L-threonine from L-aspartate: step 4/5. Catalyzes the ATP-dependent phosphorylation of L-homoserine to L-homoserine phosphate. The protein is Homoserine kinase of Natronomonas pharaonis (strain ATCC 35678 / DSM 2160 / CIP 103997 / JCM 8858 / NBRC 14720 / NCIMB 2260 / Gabara) (Halobacterium pharaonis).